The primary structure comprises 348 residues: Rhodopsin (348 aa).

Methionine 1 is modified (N-acetylmethionine). Residues 1 to 36 (MNGTEGPNFYVPFSNATGVVRSPFEYPQYYLAEPWQ) are Extracellular-facing. 2 N-linked (GlcNAc...) asparagine glycosylation sites follow: asparagine 2 and asparagine 15. Residues 37–61 (FSMLAAYMFLLIVLGFPINFLTLYV) traverse the membrane as a helical segment. The Cytoplasmic segment spans residues 62–73 (TVQHKKLRTPLN). Residues 74-96 (YILLNLAVADLFMVLGGFTSTLY) form a helical membrane-spanning segment. Over 97 to 110 (TSLHGYFVFGPTGC) the chain is Extracellular. A disulfide bridge connects residues cysteine 110 and cysteine 187. A helical transmembrane segment spans residues 111-133 (NLEGFFATLGGEIALWSLVVLAI). Positions 134-136 (ERY) match the 'Ionic lock' involved in activated form stabilization motif. Residues 134–152 (ERYVVVCKPMSNFRFGENH) lie on the Cytoplasmic side of the membrane. Residues 153–173 (AIMGVAFTWVMALACAAPPLA) traverse the membrane as a helical segment. Residues 174 to 202 (GWSRYIPEGLQCSCGIDYYTLKPEVNNES) are Extracellular-facing. Glutamate 201 is a binding site for Zn(2+). A helical transmembrane segment spans residues 203-224 (FVIYMFVVHFTIPMIIIFFCYG). Residues 225–252 (QLVFTVKEAAAQQQESATTQKAEKEVTR) lie on the Cytoplasmic side of the membrane. The helical transmembrane segment at 253-274 (MVIIMVIAFLICWVPYASVAFY) threads the bilayer. The Extracellular portion of the chain corresponds to 275–284 (IFTHQGSNFG). Glutamine 279 serves as a coordination point for Zn(2+). A helical transmembrane segment spans residues 285–309 (PIFMTIPAFFAKSAAIYNPVIYIMM). At lysine 296 the chain carries N6-(retinylidene)lysine. Over 310–348 (NKQFRNCMLTTICCGKNPLGDDEASATVSKTETSQVAPA) the chain is Cytoplasmic. Residues cysteine 322 and cysteine 323 are each lipidated (S-palmitoyl cysteine). An interaction with SAG region spans residues 330–348 (DDEASATVSKTETSQVAPA). A Phosphoserine modification is found at serine 334. At threonine 336 the chain carries Phosphothreonine. Phosphoserine is present on serine 338. Phosphothreonine is present on residues threonine 340 and threonine 342. Serine 343 carries the post-translational modification Phosphoserine.

This sequence belongs to the G-protein coupled receptor 1 family. Opsin subfamily. In terms of assembly, homodimer. May form a complex composed of RHO, GRK1 and RCVRN in a Ca(2+)-dependent manner; RCVRN prevents the interaction between GRK1 and RHO. Interacts with GRK1. Interacts (phosphorylated form) with SAG. Interacts with GNAT1. Interacts with GNAT3. SAG and G-proteins compete for a common binding site. Interacts with PRCD; the interaction promotes PRCD stability. Forms a complex with ASAP1 and ARF4. Forms a complex with ASAP1, RAB11A, Rabin8/RAB3IP, ARF4 and RAB11FIP3; the complex regulates Golgi-to-cilia rhodopsin/RHO transport in photoreceptors. Phosphorylated on some or all of the serine and threonine residues present in the C-terminal region. After activation by light, phosphorylated by GRK1 (in vitro). Post-translationally, contains one covalently linked retinal chromophore. Upon light absorption, the covalently bound 11-cis-retinal is converted to all-trans-retinal. After hydrolysis of the Schiff base and release of the covalently bound all-trans-retinal, active rhodopsin is regenerated by binding of a fresh molecule of 11-cis-retinal. As to expression, rod shaped photoreceptor cells which mediate vision in dim light.

It is found in the membrane. The protein localises to the cell projection. The protein resides in the cilium. Its subcellular location is the photoreceptor outer segment. Photoreceptor required for image-forming vision at low light intensity. Required for photoreceptor cell viability after birth. Light-induced isomerization of the chromophore 11-cis-retinal to all-trans-retinal triggers a conformational change that activates signaling via G-proteins. Subsequent receptor phosphorylation mediates displacement of the bound G-protein alpha subunit by the arrestin SAG and terminates signaling. This Homo sapiens (Human) protein is Rhodopsin (RHO).